The sequence spans 466 residues: UDP-N-acetylmuramoylalanine--D-glutamate ligase (466 aa).

121–127 provides a ligand contact to ATP; the sequence is GTNGKST.

It belongs to the MurCDEF family.

It localises to the cytoplasm. The enzyme catalyses UDP-N-acetyl-alpha-D-muramoyl-L-alanine + D-glutamate + ATP = UDP-N-acetyl-alpha-D-muramoyl-L-alanyl-D-glutamate + ADP + phosphate + H(+). It participates in cell wall biogenesis; peptidoglycan biosynthesis. Functionally, cell wall formation. Catalyzes the addition of glutamate to the nucleotide precursor UDP-N-acetylmuramoyl-L-alanine (UMA). The chain is UDP-N-acetylmuramoylalanine--D-glutamate ligase from Rhodopseudomonas palustris (strain HaA2).